The sequence spans 1400 residues: DNA-directed RNA polymerase subunit beta' (1400 aa).

Zn(2+)-binding residues include C71, C73, C86, and C89. D462, D464, and D466 together coordinate Mg(2+). C811, C885, C892, and C895 together coordinate Zn(2+).

The protein belongs to the RNA polymerase beta' chain family. In terms of assembly, the RNAP catalytic core consists of 2 alpha, 1 beta, 1 beta' and 1 omega subunit. When a sigma factor is associated with the core the holoenzyme is formed, which can initiate transcription. Requires Mg(2+) as cofactor. It depends on Zn(2+) as a cofactor.

The catalysed reaction is RNA(n) + a ribonucleoside 5'-triphosphate = RNA(n+1) + diphosphate. DNA-dependent RNA polymerase catalyzes the transcription of DNA into RNA using the four ribonucleoside triphosphates as substrates. This chain is DNA-directed RNA polymerase subunit beta', found in Brucella abortus (strain S19).